We begin with the raw amino-acid sequence, 267 residues long: Glutamate 5-kinase (267 aa).

An ATP-binding site is contributed by Lys-15. 3 residues coordinate substrate: Ser-55, Asp-142, and Asn-158. ATP-binding positions include 178 to 179 and 220 to 226; these read SD and TGGMATK.

Belongs to the glutamate 5-kinase family.

It is found in the cytoplasm. The catalysed reaction is L-glutamate + ATP = L-glutamyl 5-phosphate + ADP. It functions in the pathway amino-acid biosynthesis; L-proline biosynthesis; L-glutamate 5-semialdehyde from L-glutamate: step 1/2. Catalyzes the transfer of a phosphate group to glutamate to form L-glutamate 5-phosphate. In Ligilactobacillus salivarius (strain UCC118) (Lactobacillus salivarius), this protein is Glutamate 5-kinase.